Here is a 380-residue protein sequence, read N- to C-terminus: NADPH quinone oxidoreductase (380 aa).

Residues 1 to 17 constitute a mitochondrion transit peptide; sequence MSSFLSKRFISTTQRAM.

The protein belongs to the zinc-containing alcohol dehydrogenase family. Quinone oxidoreductase subfamily. As to quaternary structure, homodimer.

Its subcellular location is the mitochondrion. The catalysed reaction is a quinone + NADH + H(+) = a quinol + NAD(+). It carries out the reaction a quinone + NADPH + H(+) = a quinol + NADP(+). NADPH quinone oxidoreductase that efficiently reduces 1,4-benzoquinone, whereas no activities are found for menadiones and methoxyquinones. The chain is NADPH quinone oxidoreductase from Kluyveromyces marxianus (Yeast).